We begin with the raw amino-acid sequence, 358 residues long: Methionine import ATP-binding protein MetN (358 aa).

Positions 14 to 255 (VVFDAVSKRF…SRHETTRALL (242 aa)) constitute an ABC transporter domain. 52-59 (GRSGAGKS) lines the ATP pocket.

The protein belongs to the ABC transporter superfamily. Methionine importer (TC 3.A.1.24) family. The complex is composed of two ATP-binding proteins (MetN), two transmembrane proteins (MetI) and a solute-binding protein (MetQ).

Its subcellular location is the cell inner membrane. The enzyme catalyses L-methionine(out) + ATP + H2O = L-methionine(in) + ADP + phosphate + H(+). It catalyses the reaction D-methionine(out) + ATP + H2O = D-methionine(in) + ADP + phosphate + H(+). Functionally, part of the ABC transporter complex MetNIQ involved in methionine import. Responsible for energy coupling to the transport system. In Rhizobium meliloti (strain 1021) (Ensifer meliloti), this protein is Methionine import ATP-binding protein MetN.